We begin with the raw amino-acid sequence, 433 residues long: Putative tartrate transporter (433 aa).

Helical transmembrane passes span 17 to 37 (IVPF…NIGF), 47 to 67 (GFSS…YFLF), 82 to 102 (IWIA…AFVQ), 113 to 133 (LLGV…SFWF), 139 to 159 (AAVT…GSPI), 177 to 197 (WMFL…LFYL), 242 to 262 (VIAL…LGIW), 275 to 295 (LQVG…MVLW), 314 to 334 (LLAA…TVLI), 350 to 370 (LWSM…IATI), and 395 to 415 (FAGG…VTLV).

This sequence belongs to the major facilitator superfamily. Phthalate permease family.

It localises to the cell membrane. Functionally, component of the tartrate utilization system and may allow entry of tartrate and tartrate dehydrogenase. This is Putative tartrate transporter (ttuB) from Agrobacterium vitis (Rhizobium vitis).